The sequence spans 205 residues: Protein-L-isoaspartate O-methyltransferase (205 aa).

The active site involves Ser-56.

This sequence belongs to the methyltransferase superfamily. L-isoaspartyl/D-aspartyl protein methyltransferase family.

The protein localises to the cytoplasm. It catalyses the reaction [protein]-L-isoaspartate + S-adenosyl-L-methionine = [protein]-L-isoaspartate alpha-methyl ester + S-adenosyl-L-homocysteine. In terms of biological role, catalyzes the methyl esterification of L-isoaspartyl residues in peptides and proteins that result from spontaneous decomposition of normal L-aspartyl and L-asparaginyl residues. It plays a role in the repair and/or degradation of damaged proteins. This is Protein-L-isoaspartate O-methyltransferase from Aeromonas hydrophila subsp. hydrophila (strain ATCC 7966 / DSM 30187 / BCRC 13018 / CCUG 14551 / JCM 1027 / KCTC 2358 / NCIMB 9240 / NCTC 8049).